Consider the following 79-residue polypeptide: Large ribosomal subunit protein uL24 (79 aa).

Residues Met1 to Thr29 are disordered. Over residues Val11–Gln23 the composition is skewed to polar residues.

The protein belongs to the universal ribosomal protein uL24 family. In terms of assembly, part of the 50S ribosomal subunit.

Its function is as follows. One of two assembly initiator proteins, it binds directly to the 5'-end of the 23S rRNA, where it nucleates assembly of the 50S subunit. Functionally, one of the proteins that surrounds the polypeptide exit tunnel on the outside of the subunit. This is Large ribosomal subunit protein uL24 (rplX) from Onion yellows phytoplasma (strain OY-M).